The following is a 248-amino-acid chain: UPF0246 protein RC0754 (248 aa).

This sequence belongs to the UPF0246 family.

This chain is UPF0246 protein RC0754, found in Rickettsia conorii (strain ATCC VR-613 / Malish 7).